The primary structure comprises 240 residues: Transmembrane emp24 domain-containing protein 6 (240 aa).

The N-terminal stretch at 1 to 21 is a signal peptide; the sequence is MSPLLFGAGLVVLNLVTSARS. Topologically, residues 22–200 are lumenal; the sequence is QKTEPLSGSG…FFLIQSNYNY (179 aa). The GOLD domain occupies 53–138; it reads TECFWQFAHQ…SVQVYLNFGV (86 aa). Residues asparagine 107 and asparagine 156 are each glycosylated (N-linked (GlcNAc...) asparagine). A helical transmembrane segment spans residues 201-223; the sequence is VNWWSTAQSLVIILSGILQLYFL. Residues 224–240 are Cytoplasmic-facing; the sequence is KRLFNVPTTTDTKKPRC.

Belongs to the EMP24/GP25L family.

Its subcellular location is the endoplasmic reticulum membrane. The sequence is that of Transmembrane emp24 domain-containing protein 6 (TMED6) from Homo sapiens (Human).